We begin with the raw amino-acid sequence, 574 residues long: 2-succinyl-5-enolpyruvyl-6-hydroxy-3-cyclohexene-1-carboxylate synthase (574 aa).

This sequence belongs to the TPP enzyme family. MenD subfamily. As to quaternary structure, homodimer. Mg(2+) serves as cofactor. Mn(2+) is required as a cofactor. Requires thiamine diphosphate as cofactor.

The catalysed reaction is isochorismate + 2-oxoglutarate + H(+) = 5-enolpyruvoyl-6-hydroxy-2-succinyl-cyclohex-3-ene-1-carboxylate + CO2. Its pathway is quinol/quinone metabolism; 1,4-dihydroxy-2-naphthoate biosynthesis; 1,4-dihydroxy-2-naphthoate from chorismate: step 2/7. It participates in cofactor biosynthesis; phylloquinone biosynthesis. Its function is as follows. Catalyzes the thiamine diphosphate-dependent decarboxylation of 2-oxoglutarate and the subsequent addition of the resulting succinic semialdehyde-thiamine pyrophosphate anion to isochorismate to yield 2-succinyl-5-enolpyruvyl-6-hydroxy-3-cyclohexene-1-carboxylate (SEPHCHC). The polypeptide is 2-succinyl-5-enolpyruvyl-6-hydroxy-3-cyclohexene-1-carboxylate synthase (Prochlorococcus marinus (strain SARG / CCMP1375 / SS120)).